The sequence spans 380 residues: Kappa-type opioid receptor (380 aa).

Over methionine 1 to alanine 57 the chain is Extracellular. Residues asparagine 25 and asparagine 39 are each glycosylated (N-linked (GlcNAc...) asparagine). The helical transmembrane segment at isoleucine 58 to isoleucine 85 threads the bilayer. Residues arginine 86–asparagine 95 lie on the Cytoplasmic side of the membrane. The chain crosses the membrane as a helical span at residues isoleucine 96–tyrosine 119. Over leucine 120–lysine 132 the chain is Extracellular. A disulfide bond links cysteine 131 and cysteine 210. The helical transmembrane segment at isoleucine 133 to valine 154 threads the bilayer. At aspartate 155–leucine 173 the chain is on the cytoplasmic side. A helical membrane pass occupies residues lysine 174–leucine 196. The Extracellular segment spans residues glycine 197–tryptophan 222. The helical transmembrane segment at aspartate 223–threonine 247 threads the bilayer. Residues leucine 248 to arginine 274 lie on the Cytoplasmic side of the membrane. Residues leucine 275–valine 296 form a helical membrane-spanning segment. Residues glutamate 297–serine 311 are Extracellular-facing. A helical membrane pass occupies residues tyrosine 312–leucine 333. Topologically, residues aspartate 334–valine 380 are cytoplasmic. Residue cysteine 345 is the site of S-palmitoyl cysteine attachment.

This sequence belongs to the G-protein coupled receptor 1 family. As to quaternary structure, interacts with NHERF1. Interacts with GABARAPL1.

The protein resides in the cell membrane. Its function is as follows. G-protein coupled opioid receptor that functions as a receptor for endogenous alpha-neoendorphins and dynorphins, but has low affinity for beta-endorphins. Also functions as a receptor for various synthetic opioids and for the psychoactive diterpene salvinorin A. Ligand binding causes a conformation change that triggers signaling via guanine nucleotide-binding proteins (G proteins) and modulates the activity of down-stream effectors, such as adenylate cyclase. Signaling leads to the inhibition of adenylate cyclase activity. Inhibits neurotransmitter release by reducing calcium ion currents and increasing potassium ion conductance. Plays a role in the perception of pain. Plays a role in mediating reduced physical activity upon treatment with synthetic opioids. Plays a role in the regulation of salivation in response to synthetic opioids. May play a role in arousal and regulation of autonomic and neuroendocrine functions. The polypeptide is Kappa-type opioid receptor (OPRK1) (Cavia porcellus (Guinea pig)).